We begin with the raw amino-acid sequence, 440 residues long: 3-phosphoshikimate 1-carboxyvinyltransferase (440 aa).

Positions 25, 26, and 30 each coordinate 3-phosphoshikimate. Lys25 lines the phosphoenolpyruvate pocket. The phosphoenolpyruvate site is built by Gly96 and Arg124. The 3-phosphoshikimate site is built by Ser168, Gln169, Asp310, and Lys337. Residue Gln169 coordinates phosphoenolpyruvate. Asp310 acts as the Proton acceptor in catalysis. Residues Arg341, Arg382, and Lys409 each coordinate phosphoenolpyruvate.

It belongs to the EPSP synthase family. Monomer.

Its subcellular location is the cytoplasm. The enzyme catalyses 3-phosphoshikimate + phosphoenolpyruvate = 5-O-(1-carboxyvinyl)-3-phosphoshikimate + phosphate. The protein operates within metabolic intermediate biosynthesis; chorismate biosynthesis; chorismate from D-erythrose 4-phosphate and phosphoenolpyruvate: step 6/7. Functionally, catalyzes the transfer of the enolpyruvyl moiety of phosphoenolpyruvate (PEP) to the 5-hydroxyl of shikimate-3-phosphate (S3P) to produce enolpyruvyl shikimate-3-phosphate and inorganic phosphate. This is 3-phosphoshikimate 1-carboxyvinyltransferase from Chlamydia trachomatis serovar D (strain ATCC VR-885 / DSM 19411 / UW-3/Cx).